Here is a 113-residue protein sequence, read N- to C-terminus: Nucleoid-associated protein CLH_3225 (113 aa).

Gly residues predominate over residues 1–14 (MAKGGFPGGFGGGN). The interval 1 to 31 (MAKGGFPGGFGGGNMNNLMKQAQKLQKQMED) is disordered.

The protein belongs to the YbaB/EbfC family. Homodimer.

The protein localises to the cytoplasm. It localises to the nucleoid. Binds to DNA and alters its conformation. May be involved in regulation of gene expression, nucleoid organization and DNA protection. The chain is Nucleoid-associated protein CLH_3225 from Clostridium botulinum (strain Alaska E43 / Type E3).